Reading from the N-terminus, the 150-residue chain is Large ribosomal subunit protein bL9 (150 aa).

This sequence belongs to the bacterial ribosomal protein bL9 family.

Functionally, binds to the 23S rRNA. In Shewanella piezotolerans (strain WP3 / JCM 13877), this protein is Large ribosomal subunit protein bL9.